Here is a 150-residue protein sequence, read N- to C-terminus: MQVILLDKVANLGSLGDQVNVKAGYARNFLVPQGKAVPATKKNVEFFEARRAELEAKLADVLTAAEARATKIKELGSVTIASKAGDEGKLFGSIGTRDIADAVTAAGVDIAKSEVRLPNGVLRTIGEHVVSFQVHSDVFAELNVVVVAEA.

Belongs to the bacterial ribosomal protein bL9 family.

In terms of biological role, binds to the 23S rRNA. The protein is Large ribosomal subunit protein bL9 of Pectobacterium atrosepticum (strain SCRI 1043 / ATCC BAA-672) (Erwinia carotovora subsp. atroseptica).